Reading from the N-terminus, the 58-residue chain is DNA-directed RNA polymerases I, II, and III subunit RPABC4 (58 aa).

Residues Cys19, Cys22, Cys36, and Cys39 each coordinate Zn(2+). The segment at 19–39 adopts a C4-type zinc-finger fold; it reads CGECHTENEIKSRDPIRCREC.

Belongs to the archaeal Rpo12/eukaryotic RPC10 RNA polymerase subunit family. Component of the RNA polymerase I (Pol I), RNA polymerase II (Pol II) and RNA polymerase III (Pol III) complexes consisting of at least 13, 12 and 17 subunits, respectively. Pol I complex consists of a ten-subunit catalytic core composed of POLR1A/RPA1, POLR1B/RPA2, POLR1C/RPAC1, POLR1D/RPAC2, POLR1H/RPA12, POLR2E/RPABC1, POLR2F/RPABC2, POLR2H/RPABC3, POLR2K/RPABC4 and POLR2L/RPABC5; a mobile stalk subunit POLR1F/RPA43 protruding from the core and additional subunits homologous to general transcription factors POLR1E/RPA49 and POLR1G/RPA34. Part of Pol I pre-initiation complex (PIC), in which Pol I core assembles with RRN3 and promoter-bound UTBF and SL1/TIF-IB complex. Pol II complex contains a ten-subunit catalytic core composed of POLR2A/RPB1, POLR2B/RPB2, POLR2C/RPB3, POLR2I/RPB9, POLR2J/RPB11, POLR2E/RPABC1, POLR2F/RPABC2, POLR2H/RPABC3, POLR2K/RPABC4 and POLR2L/RPABC5 and a mobile stalk composed of two subunits POLR2D/RPB4 and POLR2G/RPB7. Part of Pol II(G) complex, in which Pol II core associates with an additional subunit POLR2M; unlike conventional Pol II, Pol II(G) functions as a transcriptional repressor. Part of TBP-based Pol II pre-initiation complex (PIC), in which Pol II core assembles with general transcription factors and other specific initiation factors including GTF2E1, GTF2E2, GTF2F1, GTF2F2, TCEA1, ERCC2, ERCC3, GTF2H2, GTF2H3, GTF2H4, GTF2H5, GTF2A1, GTF2A2, GTF2B and TBP; this large multi-subunit PIC complex mediates DNA unwinding and targets Pol II core to the transcription start site where the first phosphodiester bond forms. Pol III complex consists of a ten-subunit catalytic core composed of POLR3A/RPC1, POLR3B/RPC2, POLR1C/RPAC1, POLR1D/RPAC2, POLR3K/RPC10, POLR2E/RPABC1, POLR2F/RPABC2, POLR2H/RPABC3, POLR2K/RPABC4 and POLR2L/RPABC5; a mobile stalk composed of two subunits POLR3H/RPC8 and CRCP/RPC9, protruding from the core and functioning primarily in transcription initiation; and additional subunits homologous to general transcription factors of the RNA polymerase II machinery, POLR3C/RPC3-POLR3F/RPC6-POLR3G/RPC7 heterotrimer required for transcription initiation and POLR3D/RPC4-POLR3E/RPC5 heterodimer involved in both transcription initiation and termination.

The protein resides in the nucleus. Its subcellular location is the nucleolus. Functionally, DNA-dependent RNA polymerase catalyzes the transcription of DNA into RNA using the four ribonucleoside triphosphates as substrates. Common component of RNA polymerases I, II and III which synthesize ribosomal RNA precursors, mRNA precursors and many functional non-coding RNAs, and a small RNAs, such as 5S rRNA and tRNAs, respectively. This is DNA-directed RNA polymerases I, II, and III subunit RPABC4 (POLR2K) from Bos taurus (Bovine).